A 333-amino-acid chain; its full sequence is MTRFVSSAINLLLVLVLGVSLSGCVTTRLPVASTSPWQALNLDTEANPLDVAFTDSRHGYLVGSNRMIRETNDGGATWNDRSLDLPEEENFRLISIDFNGDEGWIAGQPGLLMHTSDGGQNWTRLFLDTKLPGEPYLITALGSHSAEMATNVGAVYETHDDGGSWEALVTDAAGAVRDLRRGDDGSYVSVSSLGNFYATWQPGDSVWQVHQRVSSQRLQSIGYQPDGNLWMVARGAQIRLNDESGNLESWTKAIIPITNGYGYMDMAWDEDGAIWAGGGNGTLLVSRDGADSWEIDPVGDRQPSNFTRMVFDWDHAFVLGERGNLLRWVGNAV.

The signal sequence occupies residues 1-23 (MTRFVSSAINLLLVLVLGVSLSG). Cys24 is lipidated: N-palmitoyl cysteine. The S-diacylglycerol cysteine moiety is linked to residue Cys24.

The protein belongs to the Ycf48 family. Part of early PSII assembly complexes which includes D1 (psbA) and PsbI; not found in mature PSII. Binds to the lumenal side of PSII complexes. Interacts with YidC.

Its subcellular location is the cellular thylakoid membrane. Functionally, a factor required for optimal assembly of photosystem II (PSII), acting in the early stages of PSII assembly. Also plays a role in replacement of photodamaged D1 (psbA). Assists YidC in synthesis of chlorophyll-binding proteins. The protein is Photosystem II assembly lipoprotein Ycf48 of Parasynechococcus marenigrum (strain WH8102).